A 241-amino-acid chain; its full sequence is HTH-type quorum-sensing regulator RhlR (241 aa).

Positions 174–239 (LMSNPVCLSH…LAAAYAAALG (66 aa)) constitute an HTH luxR-type domain. A DNA-binding region (H-T-H motif) is located at residues 198–217 (SGEIAIILSISESTVNFHHK).

The protein belongs to the autoinducer-regulated transcriptional regulatory protein family. Homodimer in the absence of any acyl-L-homoserine lactone. The presence of the autoinducer C4-HSL has no significant effect on dimerization whereas N-(3-oxododecanoyl)-L-homoserine lactone (3O-C12-HSL), the LasR inducer, is able to dissociate the RhlR homodimers into monomers.

It localises to the cytoplasm. Its activity is regulated as follows. Activated by interaction with the autoinducer signal molecule N-butanoyl-L-homoserine lactone (C4-HSL or BHL), the product of the RhlI synthase. Is also activated by binding to rosmarinic acid (RA), a homoserine lactone mimic produced by plants, which induces a broad quorum sensing response, including the induction of all major quorum sensing controlled virulence factors. Rosmarinic acid secretion may be a plant defense mechanism to stimulate a premature quorum sensing response. Its function is as follows. Quorum-sensing regulator that controls the expression of multiple virulence factors in response to extracellular signaling molecules called autoinducers. Involved, among others, in the transcriptional regulation of genes that are responsible for rhamnolipid surfactant biosynthesis. Acts by binding to a specific sequence in the rhlAB regulatory region, both in the presence and in the absence of its autoinducer. In the former case it activates transcription of the promoter, whereas in the latter it acts as a transcriptional repressor. Also regulates the expression of the rmlBDAC operon, encoding dTDP-L-rhamnose biosynthetic enzymes, by binding to the rml box in the promoter region. In addition, is involved in the regulation of the production of elastase (lasB) and pyocyanine. In Pseudomonas aeruginosa (strain ATCC 15692 / DSM 22644 / CIP 104116 / JCM 14847 / LMG 12228 / 1C / PRS 101 / PAO1), this protein is HTH-type quorum-sensing regulator RhlR.